Consider the following 588-residue polypeptide: UvrABC system protein C (588 aa).

The GIY-YIG domain occupies 12-89 (SKPGCYLYLN…IKKYRPKYNV (78 aa)). The UVR domain occupies 194-229 (NEVKTLLTNQMHKAAENLQFEEAQRIKEQIISLDFT).

Belongs to the UvrC family. As to quaternary structure, interacts with UvrB in an incision complex.

It is found in the cytoplasm. In terms of biological role, the UvrABC repair system catalyzes the recognition and processing of DNA lesions. UvrC both incises the 5' and 3' sides of the lesion. The N-terminal half is responsible for the 3' incision and the C-terminal half is responsible for the 5' incision. This chain is UvrABC system protein C, found in Mesoplasma florum (strain ATCC 33453 / NBRC 100688 / NCTC 11704 / L1) (Acholeplasma florum).